The following is a 99-amino-acid chain: uncharacterized protein (99 aa).

The protein belongs to the ycf15 family.

It is found in the plastid. It localises to the chloroplast. This is an uncharacterized protein from Saccharum hybrid (Sugarcane).